Consider the following 375-residue polypeptide: Baseplate protein gp16 (375 aa).

Belongs to the skunalikevirus baseplate protein gp16 family. As to quaternary structure, homotrimer.

It localises to the virion. In terms of biological role, forms a dome thereby closing the central channel at the end of the baseplate. Changes its conformation upon activation by calcium allowing the channel to open at the bottom of the baseplate for DNA ejection. The protein is Baseplate protein gp16 of Lactococcus lactis (Lactococcus lactis bacteriophage SK1).